A 325-amino-acid chain; its full sequence is Glutarate 2-hydroxylase (325 aa).

Fe cation is bound by residues His-160, Asp-162, and His-292.

Belongs to the glutarate hydroxylase family. Homotetramer. Requires Fe(2+) as cofactor.

The enzyme catalyses glutarate + 2-oxoglutarate + O2 = (S)-2-hydroxyglutarate + succinate + CO2. Its pathway is amino-acid degradation. Its function is as follows. Acts as an alpha-ketoglutarate-dependent dioxygenase catalyzing hydroxylation of glutarate (GA) to L-2-hydroxyglutarate (L2HG). Functions in a L-lysine degradation pathway that proceeds via cadaverine, glutarate and L-2-hydroxyglutarate. The polypeptide is Glutarate 2-hydroxylase (Shigella boydii serotype 18 (strain CDC 3083-94 / BS512)).